We begin with the raw amino-acid sequence, 84 residues long: Perlustrin (84 aa).

One can recognise an IGFBP N-terminal domain in the interval 1–82; it reads LSCASCENAA…LDFKGVCARV (82 aa). 6 disulfides stabilise this stretch: C3–C28, C6–C30, C11–C31, C18–C34, C42–C55, and C49–C79.

In terms of tissue distribution, shell.

Functionally, binds human IGF1 and IGF2 and bovine insulin. In Haliotis laevigata (Smooth Australian abalone), this protein is Perlustrin.